A 247-amino-acid chain; its full sequence is Serine/threonine-protein phosphatase 2A activator (247 aa).

It belongs to the PTPA-type PPIase family.

Its subcellular location is the cytoplasm. It catalyses the reaction [protein]-peptidylproline (omega=180) = [protein]-peptidylproline (omega=0). In terms of biological role, PPIases accelerate the folding of proteins. It catalyzes the cis-trans isomerization of proline imidic peptide bonds in oligopeptides. Acts as a regulatory subunit for PP2A-like phosphatases modulating their activity or substrate specificity, probably by inducing a conformational change in the catalytic subunit, a direct target of the PPIase. Can reactivate inactive phosphatase PP2A-phosphatase methylesterase complexes (PP2Ai) in presence of ATP and Mg(2+) by dissociating the inactive form from the complex. The sequence is that of Serine/threonine-protein phosphatase 2A activator from Encephalitozoon cuniculi (strain GB-M1) (Microsporidian parasite).